The chain runs to 45 residues: Pollen allergen Amb a 5 (45 aa).

Cystine bridges form between Cys-4–Cys-39, Cys-11–Cys-26, Cys-18–Cys-32, and Cys-19–Cys-43.

Monomer.

In Ambrosia artemisiifolia var. elatior (Short ragweed), this protein is Pollen allergen Amb a 5.